Here is a 362-residue protein sequence, read N- to C-terminus: MDDLIARHYNFTGKFRKVHKDPGLKADSVVFIIVCCFIILENVLVLLTIWRTKKFHKPMYYFIGNLALSDLLAGVVYTANILLSGANTYKLTPTQWFFREGSMFVALAASVFSLLAIAIERHLTMLKMKLHNNGKTCRVFMLISTVWFIAAILGGLPVMGWNCIDSMNNCSTVLPLYHKAYILFCTTVFSVILMAIVILYARIYALVRTRSRKLVFRKVANGRGSNKSSEKSMALLKTVIIVLSCFIACWAPLFILLLLDVACQTLTCSILYKAEWFLALAVLNSAMNPLIYTLTSNEMRRAFIKMLNCGVCVQPSGKFSRPIMGAEFSRSKSDNSSHPNKDEPEYSPRETIVSSGNITSSS.

Residues 1–25 lie on the Extracellular side of the membrane; it reads MDDLIARHYNFTGKFRKVHKDPGLK. N-linked (GlcNAc...) asparagine glycosylation is present at N10. Residues 26–47 form a helical membrane-spanning segment; it reads ADSVVFIIVCCFIILENVLVLL. Over 48 to 61 the chain is Cytoplasmic; sequence TIWRTKKFHKPMYY. A helical transmembrane segment spans residues 62 to 83; sequence FIGNLALSDLLAGVVYTANILL. Topologically, residues 84–95 are extracellular; it reads SGANTYKLTPTQ. Residues 96–117 form a helical membrane-spanning segment; the sequence is WFFREGSMFVALAASVFSLLAI. 99 to 100 contributes to the sphing-4-enine 1-phosphate binding site; the sequence is RE. At 118-139 the chain is on the cytoplasmic side; the sequence is AIERHLTMLKMKLHNNGKTCRV. A helical membrane pass occupies residues 140 to 161; that stretch reads FMLISTVWFIAAILGGLPVMGW. The Extracellular portion of the chain corresponds to 162-175; the sequence is NCIDSMNNCSTVLP. The cysteines at positions 163 and 170 are disulfide-linked. The N-linked (GlcNAc...) asparagine glycan is linked to N169. A helical membrane pass occupies residues 176–203; sequence LYHKAYILFCTTVFSVILMAIVILYARI. Over 204 to 238 the chain is Cytoplasmic; that stretch reads YALVRTRSRKLVFRKVANGRGSNKSSEKSMALLKT. Residues 239–259 form a helical membrane-spanning segment; sequence VIIVLSCFIACWAPLFILLLL. 246–250 serves as a coordination point for sphing-4-enine 1-phosphate; sequence FIACW. Residues 260–270 are Extracellular-facing; sequence DVACQTLTCSI. The cysteines at positions 263 and 268 are disulfide-linked. The helical transmembrane segment at 271–291 threads the bilayer; the sequence is LYKAEWFLALAVLNSAMNPLI. The Cytoplasmic portion of the chain corresponds to 292–362; sequence YTLTSNEMRR…VSSGNITSSS (71 aa). C309 carries the S-palmitoyl cysteine lipid modification. A disordered region spans residues 328-362; it reads FSRSKSDNSSHPNKDEPEYSPRETIVSSGNITSSS. Residues 329 to 348 are compositionally biased toward basic and acidic residues; it reads SRSKSDNSSHPNKDEPEYSP. Residues 352–362 show a composition bias toward polar residues; the sequence is IVSSGNITSSS.

It belongs to the G-protein coupled receptor 1 family.

It is found in the cell membrane. In terms of biological role, G-protein coupled receptor for the bioactive lysosphingolipid sphingosine 1-phosphate (S1P) that seems to be coupled to the G(i) subclass of heteromeric G proteins. Signaling leads to the activation of RAC1, SRC, PTK2/FAK1 and MAP kinases. Plays an important role in cell migration, probably via its role in the reorganization of the actin cytoskeleton and the formation of lamellipodia in response to stimuli that increase the activity of the sphingosine kinase SPHK1. Required for normal chemotaxis toward sphingosine 1-phosphate. This is Sphingosine 1-phosphate receptor 1 (s1pr1) from Danio rerio (Zebrafish).